Here is a 209-residue protein sequence, read N- to C-terminus: Thymidylate kinase (209 aa).

13–20 (GLEGAGKS) lines the ATP pocket.

The protein belongs to the thymidylate kinase family.

The catalysed reaction is dTMP + ATP = dTDP + ADP. Functionally, phosphorylation of dTMP to form dTDP in both de novo and salvage pathways of dTTP synthesis. The protein is Thymidylate kinase of Shewanella sp. (strain MR-4).